The chain runs to 379 residues: Anthranilate O-methyltransferase 3 (379 aa).

Positions 1 to 10 (MPMRIERDLH) are enriched in basic and acidic residues. A disordered region spans residues 1-21 (MPMRIERDLHMATGNGETSYT). Residue Tyr20 participates in S-adenosyl-L-homocysteine binding. An anthranilate-binding site is contributed by Gln27. S-adenosyl-L-homocysteine is bound by residues Cys61, Asn66, Asp100, Leu101, Ser143, and Phe144. The anthranilate site is built by His164 and Trp165. Positions 265 and 267 each coordinate Mg(2+).

Belongs to the methyltransferase superfamily. Type-7 methyltransferase family. SABATH subfamily.

The catalysed reaction is anthranilate + S-adenosyl-L-methionine = O-methyl anthranilate + S-adenosyl-L-homocysteine. The enzyme catalyses benzoate + S-adenosyl-L-methionine = methyl benzoate + S-adenosyl-L-homocysteine. It catalyses the reaction salicylate + S-adenosyl-L-methionine = methyl salicylate + S-adenosyl-L-homocysteine. Functionally, methyltransferase involved in the biosynthesis of methyl anthranilate in response to stresses. Utilizes anthranilic acid as substrate. Produces exclusively the O-methyl ester. Can also use benzoic acid as substrate. Low activity with salicylic acid. In Zea mays (Maize), this protein is Anthranilate O-methyltransferase 3 (AAMT3).